We begin with the raw amino-acid sequence, 489 residues long: UDP-N-acetylmuramoylalanine--D-glutamate ligase (489 aa).

ATP is bound at residue 126–132 (GTNGKTT).

The protein belongs to the MurCDEF family.

Its subcellular location is the cytoplasm. The enzyme catalyses UDP-N-acetyl-alpha-D-muramoyl-L-alanine + D-glutamate + ATP = UDP-N-acetyl-alpha-D-muramoyl-L-alanyl-D-glutamate + ADP + phosphate + H(+). The protein operates within cell wall biogenesis; peptidoglycan biosynthesis. Cell wall formation. Catalyzes the addition of glutamate to the nucleotide precursor UDP-N-acetylmuramoyl-L-alanine (UMA). The polypeptide is UDP-N-acetylmuramoylalanine--D-glutamate ligase (Mycolicibacterium paratuberculosis (strain ATCC BAA-968 / K-10) (Mycobacterium paratuberculosis)).